The primary structure comprises 800 residues: Internalin A (800 aa).

An N-terminal signal peptide occupies residues 1-35; that stretch reads MRKKRYVWLKSILVAILVFGSGVWINTSNGTNAQA. In terms of domain architecture, LRRNT spans 36 to 76; it reads ATITQDTPINQIFTDAALAEKMKTVLGKTNVTDTVSQTDLD. LRR repeat units follow at residues 77 to 98, 99 to 120, 121 to 142, 143 to 164, 165 to 186, 187 to 207, 208 to 229, 230 to 251, 252 to 273, 274 to 295, 296 to 317, 318 to 339, 340 to 361, 362 to 383, and 384 to 405; these read QVTT…EYLN, NLTQ…KDLT, KLVD…ANLT, NLTG…KNLT, NLNR…SGLT, NLQQ…ANLT, TLER…AKLT, NLES…GILT, NLDE…ASLT, NLTD…SGLT, KLTE…AGLT, ALTN…SNLK, NLTY…SSLT, KLQR…ANLT, and NINW…ANLT. The LRRCT domain occupies 416–505; that stretch reads AWTNAPVNYK…AIFNAKFHVD (90 aa). The stretch at 518–587 is one B-1 repeat; sequence LLTEPAKPVK…TTSQTVDYQG (70 aa). Residues 518-706 form a 3 X approximate tandem repeats, type B region; that stretch reads LLTEPAKPVK…ITLYAQFTKN (189 aa). Residues 588–657 form a B-2 repeat; the sequence is LLQEPTPPTK…STTQAVDYQG (70 aa). Residues 658–706 form a B-3 repeat; it reads LLKEPKAPTKAGYTFKGWYDEKTDGKKWDFATDKMPANDITLYAQFTKN. The segment at 705 to 757 is disordered; the sequence is KNPVAPPTTGGNTPPTTNNGGNTTPPSANIPGSDTSNTSTGNSASTTSTMNAY. Residues 711–753 show a composition bias toward low complexity; that stretch reads PTTGGNTPPTTNNGGNTTPPSANIPGSDTSNTSTGNSASTTST. An LPXTG sorting signal motif is present at residues 767-771; sequence LPTTG. Residue threonine 770 is modified to Pentaglycyl murein peptidoglycan amidated threonine. Positions 771–800 are cleaved as a propeptide — removed by sortase A; it reads GDSDNALYLLLGLLAVGTAMALTKKARASK.

It belongs to the internalin family.

The protein localises to the secreted. It localises to the cell wall. Its function is as follows. Mediates the entry of Listeria monocytogenes into cells. Binds to host receptor cadherin-1 (E-cadherin, CDH1). The protein is Internalin A (inlA) of Listeria monocytogenes serotype 1/2a (strain 10403S).